The sequence spans 355 residues: 3-dehydroquinate synthase (355 aa).

Residues 66-71 (SGETTK), 100-104 (GATGD), 124-125 (TT), lysine 136, lysine 145, and 163-166 (FLET) each bind NAD(+). Positions 178, 242, and 256 each coordinate Zn(2+).

The protein belongs to the sugar phosphate cyclases superfamily. Dehydroquinate synthase family. It depends on Co(2+) as a cofactor. Requires Zn(2+) as cofactor. The cofactor is NAD(+).

Its subcellular location is the cytoplasm. The enzyme catalyses 7-phospho-2-dehydro-3-deoxy-D-arabino-heptonate = 3-dehydroquinate + phosphate. It functions in the pathway metabolic intermediate biosynthesis; chorismate biosynthesis; chorismate from D-erythrose 4-phosphate and phosphoenolpyruvate: step 2/7. Catalyzes the conversion of 3-deoxy-D-arabino-heptulosonate 7-phosphate (DAHP) to dehydroquinate (DHQ). The chain is 3-dehydroquinate synthase from Staphylococcus saprophyticus subsp. saprophyticus (strain ATCC 15305 / DSM 20229 / NCIMB 8711 / NCTC 7292 / S-41).